Here is a 557-residue protein sequence, read N- to C-terminus: Protein Red (557 aa).

The disordered stretch occupies residues 1-90 (MPERDSEPFS…YAKLRQQEIE (90 aa)). Residues 16 to 25 (DGHDVDDPHS) are compositionally biased toward basic and acidic residues. Over residues 42–53 (TPRAAPTSAPPS) the composition is skewed to low complexity. N6-acetyllysine is present on residues lysine 98 and lysine 137. A Glycyl lysine isopeptide (Lys-Gly) (interchain with G-Cter in SUMO2) cross-link involves residue lysine 151. The interval 181–205 (KEKEEEELMEKPQKETKKDEDPENK) is disordered. Serine 287 bears the Phosphoserine mark. Over residues 294–303 (RNKKLKKKDK) the composition is skewed to basic residues. A disordered region spans residues 294–402 (RNKKLKKKDK…PMDVDKGPGS (109 aa)). A compositionally biased stretch (basic and acidic residues) spans 304–313 (GKLEEKKPPE). Residues lysine 310 and lysine 331 each participate in a glycyl lysine isopeptide (Lys-Gly) (interchain with G-Cter in SUMO2) cross-link. Over residues 332-398 (TPRDKERERY…VDDEPMDVDK (67 aa)) the composition is skewed to basic and acidic residues. 17 repeat units span residues 342–343 (RE), 344–345 (RE), 346–347 (RD), 348–349 (RE), 350–351 (RD), 352–353 (RD), 354–355 (RE), 356–357 (RD), 358–359 (RE), 360–361 (RD), 362–363 (RE), 364–365 (RE), 366–367 (RE), 368–369 (RD), 370–371 (RE), 372–373 (RE), and 374–375 (RE). The interval 342–375 (RERERDRERDRDRERDRERDRERERERDRERERE) is 17 X 2 AA tandem repeats of R-[ED]. Glycyl lysine isopeptide (Lys-Gly) (interchain with G-Cter in SUMO2) cross-links involve residues lysine 386, lysine 388, lysine 404, and lysine 408. Phosphoserine is present on residues serine 417 and serine 460. Residue threonine 485 is modified to Phosphothreonine. Residues lysine 496, lysine 501, and lysine 509 each participate in a glycyl lysine isopeptide (Lys-Gly) (interchain with G-Cter in SUMO2) cross-link. Serine 536 carries the post-translational modification Phosphoserine. Residues lysine 541, lysine 543, lysine 544, and lysine 553 each participate in a glycyl lysine isopeptide (Lys-Gly) (interchain with G-Cter in SUMO2) cross-link.

This sequence belongs to the RED family. As to quaternary structure, component of the spliceosome B complex. Interacts with SMU1. Interacts with MAD1L1. May interact with DHX15.

It localises to the nucleus. The protein resides in the nucleoplasm. Its subcellular location is the chromosome. It is found in the cytoplasm. The protein localises to the cytoskeleton. It localises to the spindle pole. Involved in pre-mRNA splicing as a component of the spliceosome. Auxiliary spliceosomal protein that regulates selection of alternative splice sites in a small set of target pre-mRNA species. Required for normal mitotic cell cycle progression. Recruits MAD1L1 and MAD2L1 to kinetochores, and is required to trigger the spindle assembly checkpoint. Required for normal accumulation of SMU1. This Rattus norvegicus (Rat) protein is Protein Red (Ik).